The chain runs to 481 residues: RAC-beta serine/threonine-protein kinase (481 aa).

N-acetylmethionine is present on M1. Residues 5–108 form the PH domain; sequence SVIKEGWLHK…WIRAIQMVAN (104 aa). S34 carries the post-translational modification Phosphoserine. Residues C60 and C77 are joined by a disulfide bond. S126 carries the post-translational modification Phosphoserine. O-linked (GlcNAc) serine glycans are attached at residues S128 and S131. The Protein kinase domain occupies 152 to 409; it reads FDYLKLLGKG…AKEVMEHRFF (258 aa). ATP is bound by residues 158–166 and K181; that span reads LGKGTFGKV. D275 acts as the Proton acceptor in catalysis. Mn(2+)-binding residues include N280 and D293. T306 carries an O-linked (GlcNAc) threonine glycan. At T309 the chain carries Phosphothreonine; by PDPK1. Residue T313 is glycosylated (O-linked (GlcNAc) threonine). Positions 410–481 constitute an AGC-kinase C-terminal domain; the sequence is LSINWQDVVQ…QFSYSASIRE (72 aa). The residue at position 447 (S447) is a Phosphoserine. T451 is subject to Phosphothreonine. 3 positions are modified to phosphoserine: S461, S474, and S478. O-linked (GlcNAc) serine; alternate glycosylation is present at S474.

It belongs to the protein kinase superfamily. AGC Ser/Thr protein kinase family. RAC subfamily. As to quaternary structure, interacts with BTBD10. Interacts with KCTD20. Interacts (via PH domain) with MTCP1, TCL1A and TCL1B; this interaction may facilitate AKT2 oligomerization and phosphorylation, hence increasing kinase activity. Interacts with PHB2; this interaction may be important for myogenic differentiation. Interacts (when phosphorylated) with CLIP3; this interaction promotes cell membrane localization. Interacts with WDFY2 (via WD repeats 1-3). In terms of processing, phosphorylation on Thr-309 and Ser-474 is required for full activity. Phosphorylation of the activation loop at Thr-309 by PDPK1/PDK1 is a prerequisite for full activation. Phosphorylated and activated by PDPK1/PDK1 in the presence of phosphatidylinositol 3,4,5-trisphosphate. Phosphorylation by mTORC2 in response to growth factors plays a key role in AKT1 activation: mTORC2 phosphorylates different sites depending on the context, such as Ser-474 or Ser-478, thereby facilitating subsequent phosphorylation of the activation loop by PDPK1/PDK1. Post-translationally, ubiquitinated; undergoes both 'Lys-48'- and 'Lys-63'-linked polyubiquitination. TRAF6-induced 'Lys-63'-linked AKT2 ubiquitination. When fully phosphorylated and translocated into the nucleus, undergoes 'Lys-48'-polyubiquitination catalyzed by TTC3, leading to its degradation by the proteasome. O-GlcNAcylation at Thr-306 and Thr-313 inhibits activating phosphorylation at Thr-309 via disrupting the interaction between AKT and PDPK1/PDK1. As to expression, expressed in adipocytes and hepatocytes (at protein level). Expressed at low levels in skeletal muscle (at protein level).

It localises to the cytoplasm. The protein localises to the nucleus. Its subcellular location is the cell membrane. The protein resides in the early endosome. It carries out the reaction L-seryl-[protein] + ATP = O-phospho-L-seryl-[protein] + ADP + H(+). The enzyme catalyses L-threonyl-[protein] + ATP = O-phospho-L-threonyl-[protein] + ADP + H(+). Its activity is regulated as follows. Phosphorylation at Thr-309 (in the kinase domain) and Ser-474 (in the C-terminal regulatory region) is required for full activation. In adipocytes and hepatocytes, the activation is induced by insulin. AKT2 phosphorylation of PKP1 is induced by insulin. Serine/threonine kinase closely related to AKT1 and AKT3. All 3 enzymes, AKT1, AKT2 and AKT3, are collectively known as AKT kinase. AKT regulates many processes including metabolism, proliferation, cell survival, growth and angiogenesis, through the phosphorylation of a range of downstream substrates. Over 100 substrates have been reported so far, although for most of them, the precise AKT kinase catalyzing the reaction was not specified. AKT regulates glucose uptake by mediating insulin-induced translocation of the SLC2A4/GLUT4 glucose transporter to the cell surface. Phosphorylation of PTPN1 at 'Ser-50' negatively modulates its phosphatase activity preventing dephosphorylation of the insulin receptor and the attenuation of insulin signaling. Phosphorylation of TBC1D4 triggers the binding of this effector to inhibitory 14-3-3 proteins, which is required for insulin-stimulated glucose transport. AKT also regulates the storage of glucose in the form of glycogen by phosphorylating GSK3A at 'Ser-21' and GSK3B at 'Ser-9', resulting in inhibition of its kinase activity. Phosphorylation of GSK3 isoforms by AKT is also thought to be one mechanism by which cell proliferation is driven. AKT also regulates cell survival via the phosphorylation of MAP3K5 (apoptosis signal-related kinase). Phosphorylation of 'Ser-83' decreases MAP3K5 kinase activity stimulated by oxidative stress and thereby prevents apoptosis. AKT mediates insulin-stimulated protein synthesis by phosphorylating TSC2 at 'Ser-939' and 'Thr-1462', thereby activating mTORC1 signaling and leading to both phosphorylation of 4E-BP1 and in activation of RPS6KB1. AKT is involved in the phosphorylation of members of the FOXO factors (Forkhead family of transcription factors), leading to binding of 14-3-3 proteins and cytoplasmic localization. In particular, FOXO1 is phosphorylated at 'Thr-24', 'Ser-256' and 'Ser-319'. FOXO3 and FOXO4 are phosphorylated on equivalent sites. AKT has an important role in the regulation of NF-kappa-B-dependent gene transcription and positively regulates the activity of CREB1 (cyclic AMP (cAMP)-response element binding protein). The phosphorylation of CREB1 induces the binding of accessory proteins that are necessary for the transcription of pro-survival genes such as BCL2 and MCL1. AKT phosphorylates 'Ser-454' on ATP citrate lyase (ACLY), thereby potentially regulating ACLY activity and fatty acid synthesis. Activates the 3B isoform of cyclic nucleotide phosphodiesterase (PDE3B) via phosphorylation of 'Ser-273', resulting in reduced cyclic AMP levels and inhibition of lipolysis. Phosphorylates PIKFYVE on 'Ser-318', which results in increased PI(3)P-5 activity. The Rho GTPase-activating protein DLC1 is another substrate and its phosphorylation is implicated in the regulation cell proliferation and cell growth. AKT plays a role as key modulator of the AKT-mTOR signaling pathway controlling the tempo of the process of newborn neurons integration during adult neurogenesis, including correct neuron positioning, dendritic development and synapse formation. Signals downstream of phosphatidylinositol 3-kinase (PI(3)K) to mediate the effects of various growth factors such as platelet-derived growth factor (PDGF), epidermal growth factor (EGF), insulin and insulin-like growth factor 1 (IGF1). AKT mediates the antiapoptotic effects of IGF1. Essential for the SPATA13-mediated regulation of cell migration and adhesion assembly and disassembly. May be involved in the regulation of the placental development. In response to lysophosphatidic acid stimulation, inhibits the ciliogenesis cascade. In this context, phosphorylates WDR44, hence stabilizing its interaction with Rab11 and preventing the formation of the ciliogenic Rab11-FIP3-RAB3IP complex. Also phosphorylates RAB3IP/Rabin8, thus may affect RAB3IP guanine nucleotide exchange factor (GEF) activity toward Rab8, which is important for cilia growth. Phosphorylates PKP1, facilitating its interaction with YWHAG and translocation to the nucleus, ultimately resulting in a reduction in keratinocyte intercellular adhesion. Phosphorylation of PKP1 increases PKP1 protein stability, translocation to the cytoplasm away from desmosome plaques and PKP1-driven cap-dependent translation. Its function is as follows. Several AKT2-specific substrates have been identified, including ANKRD2, C2CD5, CLK2 and PITX2. May play a role in myoblast differentiation. In this context, may act through PITX2 phosphorylation. Unphosphorylated PITX2 associates with an ELAVL1/HuR-containing complex, which stabilizes cyclin mRNA and ensuring cell proliferation. Phosphorylation by AKT2 impairs this association, leading to CCND1 mRNA destabilization and progression towards differentiation. Also involved in the negative regulation of myogenesis in response to stress conditions. In this context, acts by phosphorylating ANKRD2. May also be a key regulator of glucose uptake. Regulates insulin-stimulated glucose transport by the increase of glucose transporter GLUT4 translocation from intracellular stores to the plasma membrane. In this context, acts by phosphorylating C2CD5/CDP138 on 'Ser-197' in insulin-stimulated adipocytes. Through the phosphorylation of CLK2 on 'Thr-343', involved in insulin-regulated suppression of hepatic gluconeogenesis. The polypeptide is RAC-beta serine/threonine-protein kinase (Rattus norvegicus (Rat)).